Reading from the N-terminus, the 236-residue chain is MATGLLAKKLGMTQIFTAEGDCIPVTVLEAGPCTVVRRKTAEKDGYDAVVIGWGEVDEKHAHRLTKPEVGVFKKAGTPVFRHVKEIRVKDAKLLGELKAGDVLTVDKVFKQDQRIDVAGVTKGRGFTGVMKRWNMHGAARDSSTTHEHHRHVGAIGQRKTPGKVWKGKHLPGHYGVDNVTIQNLTIVGVEADKNLLLVKGAVPGHNDGLLFVNTAVKGQPRVKKVQEVRARAKPKV.

The segment at 139–163 (ARDSSTTHEHHRHVGAIGQRKTPGK) is disordered.

It belongs to the universal ribosomal protein uL3 family. As to quaternary structure, part of the 50S ribosomal subunit. Forms a cluster with proteins L14 and L19.

In terms of biological role, one of the primary rRNA binding proteins, it binds directly near the 3'-end of the 23S rRNA, where it nucleates assembly of the 50S subunit. This chain is Large ribosomal subunit protein uL3, found in Anaeromyxobacter sp. (strain Fw109-5).